Reading from the N-terminus, the 936-residue chain is Bifunctional uridylyltransferase/uridylyl-removing enzyme (936 aa).

The segment at 1–372 (MTIPRIRQPR…SIATLLMRKR (372 aa)) is uridylyltransferase. The tract at residues 373–727 (NLGDFVLDGG…VLPDPERAVS (355 aa)) is uridylyl-removing. An HD domain is found at 488-610 (TDEHTIRAIG…VQSVERLHLL (123 aa)). 2 ACT domains span residues 728-809 (EVLV…KALR) and 840-915 (VIEI…TVPR). A compositionally biased stretch (basic and acidic residues) spans 915-930 (RKVEEGAEQGAEKADA). The disordered stretch occupies residues 915–936 (RKVEEGAEQGAEKADAGEIVAA).

Belongs to the GlnD family. It depends on Mg(2+) as a cofactor.

It catalyses the reaction [protein-PII]-L-tyrosine + UTP = [protein-PII]-uridylyl-L-tyrosine + diphosphate. It carries out the reaction [protein-PII]-uridylyl-L-tyrosine + H2O = [protein-PII]-L-tyrosine + UMP + H(+). Uridylyltransferase (UTase) activity is inhibited by glutamine, while glutamine activates uridylyl-removing (UR) activity. Its function is as follows. Modifies, by uridylylation and deuridylylation, the PII regulatory proteins (GlnB and homologs), in response to the nitrogen status of the cell that GlnD senses through the glutamine level. Under low glutamine levels, catalyzes the conversion of the PII proteins and UTP to PII-UMP and PPi, while under higher glutamine levels, GlnD hydrolyzes PII-UMP to PII and UMP (deuridylylation). Thus, controls uridylylation state and activity of the PII proteins, and plays an important role in the regulation of nitrogen fixation and metabolism. This chain is Bifunctional uridylyltransferase/uridylyl-removing enzyme, found in Rhodospirillum rubrum (strain ATCC 11170 / ATH 1.1.1 / DSM 467 / LMG 4362 / NCIMB 8255 / S1).